A 193-amino-acid polypeptide reads, in one-letter code: Holliday junction branch migration complex subunit RuvA (193 aa).

The domain I stretch occupies residues 1–64; it reads MIGRIAGILL…EDAHLLYGFL (64 aa). Positions 65–139 are domain II; the sequence is TPQERTTFRE…GKLGADLGAL (75 aa). Residues 139-143 form a flexible linker region; the sequence is LAGAA. The domain III stretch occupies residues 144 to 193; it reads SQSDHATDILNALVALGYSEKEGLAAIKNVPAGTGVSEGIKLALKALSKV.

Belongs to the RuvA family. Homotetramer. Forms an RuvA(8)-RuvB(12)-Holliday junction (HJ) complex. HJ DNA is sandwiched between 2 RuvA tetramers; dsDNA enters through RuvA and exits via RuvB. An RuvB hexamer assembles on each DNA strand where it exits the tetramer. Each RuvB hexamer is contacted by two RuvA subunits (via domain III) on 2 adjacent RuvB subunits; this complex drives branch migration. In the full resolvosome a probable DNA-RuvA(4)-RuvB(12)-RuvC(2) complex forms which resolves the HJ.

It localises to the cytoplasm. The RuvA-RuvB-RuvC complex processes Holliday junction (HJ) DNA during genetic recombination and DNA repair, while the RuvA-RuvB complex plays an important role in the rescue of blocked DNA replication forks via replication fork reversal (RFR). RuvA specifically binds to HJ cruciform DNA, conferring on it an open structure. The RuvB hexamer acts as an ATP-dependent pump, pulling dsDNA into and through the RuvAB complex. HJ branch migration allows RuvC to scan DNA until it finds its consensus sequence, where it cleaves and resolves the cruciform DNA. The sequence is that of Holliday junction branch migration complex subunit RuvA from Burkholderia ambifaria (strain MC40-6).